Here is a 360-residue protein sequence, read N- to C-terminus: Phospho-N-acetylmuramoyl-pentapeptide-transferase (360 aa).

10 consecutive transmembrane segments (helical) span residues 2–22 (IAILVSGAVGLLVSLFGTPLF), 52–72 (MGGVVIIAATVLGYTVANISA), 80–100 (GLLLLFLMIGLGVIGFLDDFI), 114–134 (WKIIGQGVIGVTFSVLALQFP), 156–176 (LAFAGAAVGLVLFVIWANFLI), 189–209 (LDGLATGVSVFVFSAYVVVTM), 235–255 (LAIVTAAIVGACAGFLWWNAS), 259–279 (IFMGDTGALALGGALAGLSIL), 284–304 (FLAVIIGGLFVVIVLSDVIQI), and 338–358 (FWLIAALFVALGVGIFYAEWV).

Belongs to the glycosyltransferase 4 family. MraY subfamily. Mg(2+) serves as cofactor.

Its subcellular location is the cell membrane. It carries out the reaction UDP-N-acetyl-alpha-D-muramoyl-L-alanyl-gamma-D-glutamyl-meso-2,6-diaminopimeloyl-D-alanyl-D-alanine + di-trans,octa-cis-undecaprenyl phosphate = di-trans,octa-cis-undecaprenyl diphospho-N-acetyl-alpha-D-muramoyl-L-alanyl-D-glutamyl-meso-2,6-diaminopimeloyl-D-alanyl-D-alanine + UMP. Its pathway is cell wall biogenesis; peptidoglycan biosynthesis. Catalyzes the initial step of the lipid cycle reactions in the biosynthesis of the cell wall peptidoglycan: transfers peptidoglycan precursor phospho-MurNAc-pentapeptide from UDP-MurNAc-pentapeptide onto the lipid carrier undecaprenyl phosphate, yielding undecaprenyl-pyrophosphoryl-MurNAc-pentapeptide, known as lipid I. In Beutenbergia cavernae (strain ATCC BAA-8 / DSM 12333 / CCUG 43141 / JCM 11478 / NBRC 16432 / NCIMB 13614 / HKI 0122), this protein is Phospho-N-acetylmuramoyl-pentapeptide-transferase.